The chain runs to 1562 residues: Cell surface antigen I/II (1562 aa).

The first 38 residues, 1 to 38 (MKVKKTYGFRKSKISKTLCGAVLGTVAAVSVAGQKVFA), serve as a signal peptide directing secretion. Over residues 42 to 54 (TTTSDVDTKVVGT) the composition is skewed to low complexity. A disordered region spans residues 42–91 (TTTSDVDTKVVGTQTGNPATNLPEAQGSASKEAEQSQNQAGETNGSIPVE). Residues 60–551 (ATNLPEAQGS…SKAKYDQKIL (492 aa)) form a helical region. Polar residues predominate over residues 76-87 (QSQNQAGETNGS). 4 Ag I/II A repeats span residues 147 to 221 (KKTT…QKTN), 222 to 303 (AANQ…QEAN), 304 to 385 (AANE…KKAN), and 386 to 467 (AANE…QKDL). Disordered regions lie at residues 824–973 (VPKV…PTDP) and 1482–1509 (SNTVKTTTPEDPTDPTDPQDPSSPRTST). The segment covering 943 to 958 (PTPPTPTPDQPEPNKP) has biased composition (pro residues). The span at 1500–1509 (QDPSSPRTST) shows a compositional bias: low complexity. The LPXTG sorting signal motif lies at 1529 to 1533 (LPNTG). At threonine 1532 the chain carries Pentaglycyl murein peptidoglycan amidated threonine. The propeptide at 1533 to 1562 (GVTNNAYMPLLGIIGLVTSFSLLGLKAKKD) is removed by sortase.

Belongs to the antigen I/II family. In terms of processing, detected as a 185 kDa cell surface protein, but also as 2 proteins in S.mutans culture supernatants of about 150 kDa (antigen I) and 50 kDa (antigen II); antigen II is only seen after proteolysis. Antigen I and II have the same N-terminus but different C-termini.

Its subcellular location is the secreted. It is found in the cell wall. Its function is as follows. Surface protein antigen implicated in dental caries. The sequence is that of Cell surface antigen I/II from Streptococcus mutans serotype c (strain ATCC 700610 / UA159).